Consider the following 63-residue polypeptide: Large ribosomal subunit protein uL29 (63 aa).

The protein belongs to the universal ribosomal protein uL29 family.

This chain is Large ribosomal subunit protein uL29, found in Yersinia pseudotuberculosis serotype O:1b (strain IP 31758).